We begin with the raw amino-acid sequence, 602 residues long: RecBCD enzyme subunit RecD (602 aa).

174–181 is an ATP binding site; it reads GGPGTGKT.

It belongs to the RecD family. Heterotrimer of RecB, RecC and RecD. All subunits contribute to DNA-binding.

It catalyses the reaction Couples ATP hydrolysis with the unwinding of duplex DNA at the replication fork by translocating in the 5'-3' direction. This creates two antiparallel DNA single strands (ssDNA). The leading ssDNA polymer is the template for DNA polymerase III holoenzyme which synthesizes a continuous strand.. The catalysed reaction is ATP + H2O = ADP + phosphate + H(+). A helicase/nuclease that prepares dsDNA breaks (DSB) for recombinational DNA repair. Binds to DSBs and unwinds DNA via a highly rapid and processive ATP-dependent bidirectional helicase activity. Unwinds dsDNA until it encounters a Chi (crossover hotspot instigator) sequence from the 3' direction. Cuts ssDNA a few nucleotides 3' to the Chi site. The properties and activities of the enzyme are changed at Chi. The Chi-altered holoenzyme produces a long 3'-ssDNA overhang and facilitates RecA-binding to the ssDNA for homologous DNA recombination and repair. Holoenzyme degrades any linearized DNA that is unable to undergo homologous recombination. In the holoenzyme this subunit has ssDNA-dependent ATPase and 5'-3' helicase activity. When added to pre-assembled RecBC greatly stimulates nuclease activity and augments holoenzyme processivity. Negatively regulates the RecA-loading ability of RecBCD. The polypeptide is RecBCD enzyme subunit RecD (Buchnera aphidicola subsp. Schizaphis graminum (strain Sg)).